A 74-amino-acid chain; its full sequence is Sec-independent protein translocase protein TatA (74 aa).

Residues 1-21 form a helical membrane-spanning segment; it reads MGSMSWIHWVIVLGIVALLFG. The segment at 51–74 is disordered; it reads EVADNKAKSALPRTEAEAEELRKS. Residues 64-74 are compositionally biased toward basic and acidic residues; sequence TEAEAEELRKS.

Belongs to the TatA/E family. The Tat system comprises two distinct complexes: a TatABC complex, containing multiple copies of TatA, TatB and TatC subunits, and a separate TatA complex, containing only TatA subunits. Substrates initially bind to the TatABC complex, which probably triggers association of the separate TatA complex to form the active translocon.

It is found in the cell inner membrane. In terms of biological role, part of the twin-arginine translocation (Tat) system that transports large folded proteins containing a characteristic twin-arginine motif in their signal peptide across membranes. TatA could form the protein-conducting channel of the Tat system. This is Sec-independent protein translocase protein TatA from Caulobacter vibrioides (strain ATCC 19089 / CIP 103742 / CB 15) (Caulobacter crescentus).